Here is a 261-residue protein sequence, read N- to C-terminus: Pyridoxine-5'-phosphate oxidase (261 aa).

42–45 (RGDR) contributes to the pyridoxal 5'-phosphate binding site. 95–98 (RMLL) provides a ligand contact to FMN. Lys-100 is a binding site for pyridoxal 5'-phosphate. Residues 110–111 (FT), 116–117 (RK), and Gln-139 each bind FMN. Pyridoxal 5'-phosphate contacts are provided by Tyr-157, Arg-161, and Ser-165. FMN contacts are provided by residues 174–175 (QS) and Trp-219. 225-227 (RLH) contributes to the pyridoxal 5'-phosphate binding site. Arg-229 is an FMN binding site. Thr-238 is modified (phosphothreonine). Phosphoserine is present on Ser-241.

Belongs to the pyridoxamine 5'-phosphate oxidase family. Homodimer. It depends on FMN as a cofactor. Detected in adult liver.

The catalysed reaction is pyridoxamine 5'-phosphate + O2 + H2O = pyridoxal 5'-phosphate + H2O2 + NH4(+). The enzyme catalyses pyridoxine 5'-phosphate + O2 = pyridoxal 5'-phosphate + H2O2. It functions in the pathway cofactor metabolism; pyridoxal 5'-phosphate salvage; pyridoxal 5'-phosphate from pyridoxamine 5'-phosphate: step 1/1. It participates in cofactor metabolism; pyridoxal 5'-phosphate salvage; pyridoxal 5'-phosphate from pyridoxine 5'-phosphate: step 1/1. In terms of biological role, catalyzes the oxidation of either pyridoxine 5'-phosphate (PNP) or pyridoxamine 5'-phosphate (PMP) into pyridoxal 5'-phosphate (PLP). In Rattus norvegicus (Rat), this protein is Pyridoxine-5'-phosphate oxidase (Pnpo).